The primary structure comprises 258 residues: IGYKNARNKLDLETLTDILQHQIRAIPFENLNIHCGETMELGLKAIFEQVVWRNRGGWCLQVNHLLYWVLTTIGYETTMLGGYVYSTAANKYSNAMIHLLLKVTTEGKNYIVDAGFGRSYQMWQPLELISGKDQLQVPCIFRLTEERGIWYLDQIRRQQYIANEEFLNSDLLEKNKYRKIYSFTLEPRTIEDFESVNTYLQTSPTSVFTSKSFCSLQTSEGVHCLVGCTLTYRKFNYKDNMDLVEFKVLNEEEVEQKL.

C59 acts as the Acyl-thioester intermediate in catalysis. 97 to 98 (IH) contributes to the substrate binding site. Residues H98 and D113 contribute to the active site. CoA-binding residues include Y199 and T205.

The protein belongs to the arylamine N-acetyltransferase family.

It is found in the cytoplasm. It carries out the reaction an arylamine + acetyl-CoA = an N-acetylarylamine + CoA. Functionally, participates in the detoxification of a plethora of hydrazine and arylamine drugs. The polypeptide is Arylamine N-acetyltransferase 1 (NAT1) (Felis catus (Cat)).